The primary structure comprises 123 residues: MRRFVRSLSSTGRSQTGSLPVRGLRKLLRFYQLTFSSLVGTQCRHLPTCSAYMDEALARHGVWAGLFIGLARLSRCHPWGTAGYDPVPDQLDANVPRLQPWRHGRWRGPLEITWKPEHKDQNL.

Belongs to the UPF0161 family.

It is found in the cell inner membrane. Functionally, could be involved in insertion of integral membrane proteins into the membrane. This chain is Putative membrane protein insertion efficiency factor, found in Beijerinckia indica subsp. indica (strain ATCC 9039 / DSM 1715 / NCIMB 8712).